Consider the following 236-residue polypeptide: Small ribosomal subunit protein uS2c (236 aa).

Belongs to the universal ribosomal protein uS2 family.

The protein localises to the plastid. The protein resides in the chloroplast. The protein is Small ribosomal subunit protein uS2c (rps2) of Populus alba (White poplar).